Consider the following 195-residue polypeptide: MQQKTISIEQREKAGKGVSRKLRAVGRVPGVVYGKGIEPVAVSVDAKELAAAIVGEGGRNNLISLQGGGSLNGNTVIVADLQKAPLKGTFISVDFHKINMDEKVRVHVPVALIGTALGAKEGGMLELVMHSLDLECLPSQIPEHVEVDVTNLAIGHAIHVGELVLAAGVKALDDPKATIVSVHGKTKEEVTVEEG.

Belongs to the bacterial ribosomal protein bL25 family. CTC subfamily. In terms of assembly, part of the 50S ribosomal subunit; part of the 5S rRNA/L5/L18/L25 subcomplex. Contacts the 5S rRNA. Binds to the 5S rRNA independently of L5 and L18.

Its function is as follows. This is one of the proteins that binds to the 5S RNA in the ribosome where it forms part of the central protuberance. The polypeptide is Large ribosomal subunit protein bL25 (Geobacter metallireducens (strain ATCC 53774 / DSM 7210 / GS-15)).